The chain runs to 115 residues: Integration host factor subunit alpha (115 aa).

Belongs to the bacterial histone-like protein family. As to quaternary structure, heterodimer of an alpha and a beta chain.

Its function is as follows. This protein is one of the two subunits of integration host factor, a specific DNA-binding protein that functions in genetic recombination as well as in transcriptional and translational control. This is Integration host factor subunit alpha from Burkholderia pseudomallei (strain K96243).